The following is a 1329-amino-acid chain: BRCT domain-containing protein At4g02110 (1329 aa).

BRCT domains follow at residues 7-97 (LPPK…SILY) and 104-194 (NGIP…DYEI). 5 disordered regions span residues 295–378 (ANKT…SMER), 393–470 (GEEF…TSEL), 576–645 (EVPE…SPTD), 745–827 (NDVP…ADGK), and 952–1077 (AKKE…KESK). Polar residues-rich tracts occupy residues 323-335 (SLAT…LQRS) and 363-378 (SAFN…SMER). Basic and acidic residues-rich tracts occupy residues 410–422 (VSRK…HHNS) and 600–611 (RMKDKQETELTT). Residues 793–802 (GKSRVKKTKI) show a composition bias toward basic residues. Composition is skewed to basic and acidic residues over residues 818–827 (DGGDNSADGK) and 971–983 (DDNK…EGIV). Positions 986-1004 (SSLQSGKKGSSSRVEVGKS) are enriched in low complexity. Positions 1024–1047 (VMKDVGDNSAKEKENIAVDNESRK) are enriched in basic and acidic residues. In terms of domain architecture, BRCT 3 spans 1090–1181 (FQDQEHEPKF…KLLQEEPYEW (92 aa)).

This Arabidopsis thaliana (Mouse-ear cress) protein is BRCT domain-containing protein At4g02110.